Reading from the N-terminus, the 115-residue chain is Large ribosomal subunit protein uL24 (115 aa).

The protein belongs to the universal ribosomal protein uL24 family. As to quaternary structure, part of the 50S ribosomal subunit.

In terms of biological role, one of two assembly initiator proteins, it binds directly to the 5'-end of the 23S rRNA, where it nucleates assembly of the 50S subunit. Functionally, one of the proteins that surrounds the polypeptide exit tunnel on the outside of the subunit. The chain is Large ribosomal subunit protein uL24 from Deinococcus geothermalis (strain DSM 11300 / CIP 105573 / AG-3a).